A 143-amino-acid chain; its full sequence is Large ribosomal subunit protein uL11 (143 aa).

It belongs to the universal ribosomal protein uL11 family. In terms of assembly, part of the ribosomal stalk of the 50S ribosomal subunit. Interacts with L10 and the large rRNA to form the base of the stalk. L10 forms an elongated spine to which L12 dimers bind in a sequential fashion forming a multimeric L10(L12)X complex. One or more lysine residues are methylated.

Its function is as follows. Forms part of the ribosomal stalk which helps the ribosome interact with GTP-bound translation factors. The sequence is that of Large ribosomal subunit protein uL11 from Caulobacter vibrioides (strain ATCC 19089 / CIP 103742 / CB 15) (Caulobacter crescentus).